The chain runs to 754 residues: MVPAFEGAGAVEGLTIWRIENFEVVPYPKEKYGQFYQGDSYIVLYTRDVNGNLSWDLHFWLGSETSQDEAGTAAIKTVELDDQLGGVPVQHREVEGHETSLFLSRFKKGVRYLKGGVASGFHHVDPDAPYPARLFHVKGRRNIRIRQVEVGVGSMNKGDCFILDCGSQVYAYMGPSSRKMDRLKAIQAANPVRADDHAGKAKVIVIDETASGSEAGESSPGLGGGSPDDVADEDTGVDDSAFERSEVNVVTLHHIFEDGDGVIQTNMIGEKPLLQSMLDSGDCFLLDTGVGVYVWIGSGSSKKEKVKSMELAAGYMEKKGYPTYTNVQRVVEKAEPAVFKAYFKTWREPQEQIGLGRVFTQRQMSAVSATETDFDVSSLHAEKRRLLQKNAGPAFALCPIMVLARRNLGPLRTLKLEPVDESTHGFFFGGDSYVLKYIYEVNGNERYILYFWQGCASSQDEKASSAIHTVRLDNELCGKAVQVRVVQGYEPAHFLRIFKGRMVIFLGGKASGFKNVHDHDTYDVDGTRLFRVRGTCDFDTRAIQQTEVAGSLNSDDVFVLETPGKTYLWIGKGASEEEKAMGEKVVELVSPGRDMVTVAEGEEDDDFWGGLGGKGDYQTARDLDRPLLYPRLFHCTISPAGCLRVNEMSDFAQEDLNEDDVMVLDSGDEVYVWVGQGSDDQEKEKAFTMAENYIKTDPTERTLDATVILRINQGEEPAAFTSIFPAWNPDMWQKGLVSYDDMKAQVPETNAAVE.

The tract at residues methionine 1 to glycine 120 is actin-severing. A Gelsolin-like 1 repeat occupies phenylalanine 22–glycine 71. An actin-actin interfilament contact point region spans residues aspartate 68–glycine 71. Residues leucine 101 to lysine 108 and arginine 133 to arginine 141 each bind a 1,2-diacyl-sn-glycero-3-phospho-(1D-myo-inositol-4,5-bisphosphate). The stretch at isoleucine 143 to leucine 183 is one Gelsolin-like 2 repeat. A disordered region spans residues threonine 209 to aspartate 238. Low complexity predominate over residues alanine 210–proline 220. 4 Gelsolin-like repeats span residues asparagine 266–valine 306, leucine 414–alanine 463, phenylalanine 538–alanine 580, and leucine 643–glutamate 684. The tract at residues leucine 386–alanine 751 is actin-binding, Ca-sensitive. The Ca(2+) site is built by glycine 430, aspartate 431, glutamate 461, aspartate 556, glutamate 578, aspartate 659, aspartate 660, and glutamate 682.

Belongs to the villin/gelsolin family. Tail muscle.

The protein resides in the cytoplasm. The protein localises to the cytoskeleton. Functionally, calcium-regulated, actin-modulating protein that binds to the plus (or barbed) ends of actin monomers or filaments, preventing monomer exchange (end-blocking or capping). It can promote the assembly of monomers into filaments (nucleation) as well as sever filaments already formed. In Homarus americanus (American lobster), this protein is Gelsolin, cytoplasmic.